The following is a 282-amino-acid chain: MRIDTVNVLLEALPYIKEFYGKTFVIKFGGSAMKQENAKKAFIQDIILLKYTGIKPIIVHGGGPAISQMMKDLGIEPVFKNGHRVTDEKTMEIVEMVLVGKINKEIVMNLNLHGGRAVGICGKDSKLIVAEKETKHGDIGYVGKVKKVNPEILHALIENDYIPVIAPVGIGEDGHSYNINADTAAAEIAKSLMAEKLILLTDVDGVLKGDKLISTLTPDEAEDLIRDGTVTGGMIPKVECAVSAVRGGVGAVHIINGGLEHAILLEIFSRKGIGTMIKELEG.

Residues 62–63 (GG), Arg84, and Asn178 each bind substrate.

Belongs to the acetylglutamate kinase family. ArgB subfamily.

The protein localises to the cytoplasm. The catalysed reaction is N-acetyl-L-glutamate + ATP = N-acetyl-L-glutamyl 5-phosphate + ADP. Its pathway is amino-acid biosynthesis; L-arginine biosynthesis; N(2)-acetyl-L-ornithine from L-glutamate: step 2/4. In terms of biological role, catalyzes the ATP-dependent phosphorylation of N-acetyl-L-glutamate. This is Acetylglutamate kinase from Thermotoga petrophila (strain ATCC BAA-488 / DSM 13995 / JCM 10881 / RKU-1).